A 1215-amino-acid chain; its full sequence is Reverse gyrase 2 (1215 aa).

Residues 3–44 (GGVNAVYMGLCYNCGGNIDEDRLEKGLPCARCLPSPPRRATP) form an RG N-terminal-type zinc finger. Positions 13, 16, 31, and 34 each coordinate Zn(2+). Residues Gln89 and 106-113 (APTGVGKS) contribute to the ATP site. One can recognise a Helicase ATP-binding domain in the interval 93-249 (AKRLVKGDSF…SLVKARLKLY (157 aa)). The short motif at 209–212 (DDVD) is the DEAD box element. Residues 614–1215 (VRVKTTLLVV…TGDVMGQSEA (602 aa)) form a topoisomerase I region. Residues 618–783 (TTLLVVESPT…NVRRGRFHEV (166 aa)) form the Toprim domain. Glu624 serves as a coordination point for Mg(2+). The RG C-terminal-type zinc finger occupies 702 to 729 (IKRCLDCGAQHTSSSPFCPRCGSPRQVD). Zn(2+) contacts are provided by Cys705, Cys708, Cys719, and Cys722. Asp752 provides a ligand contact to Mg(2+). The 402-residue stretch at 799–1200 (EKSLIEAQKV…SVWRMVDEAV (402 aa)) folds into the Topo IA-type catalytic domain. The O-(5'-phospho-DNA)-tyrosine intermediate role is filled by Tyr943.

In the N-terminal section; belongs to the DEAD box helicase family. DDVD subfamily. The protein in the C-terminal section; belongs to the type IA topoisomerase family. In terms of assembly, monomer. The cofactor is Zn(2+). Mg(2+) serves as cofactor.

The protein localises to the cytoplasm. It catalyses the reaction ATP + H2O = ADP + phosphate + H(+). Modifies the topological state of DNA by introducing positive supercoils in an ATP-dependent process, increasing the linking number in steps of +1. Binds to single-stranded DNA, transiently cleaves and then rejoins the ends, introducing a positive supercoil in the process. The scissile phosphodiester is attacked by the catalytic tyrosine of the enzyme, resulting in the formation of a DNA-(5'-phosphotyrosyl)-enzyme intermediate. Probably involved in rewinding DNA strands in regions of the chromosome that have opened up to allow replication, transcription, DNA repair and/or for DNA protection. The protein is Reverse gyrase 2 of Aeropyrum pernix (strain ATCC 700893 / DSM 11879 / JCM 9820 / NBRC 100138 / K1).